The following is an 87-amino-acid chain: Small ribosomal subunit protein bS18 (87 aa).

The span at 1-20 (MAGKSSGDRRKPIRKGKDGK) shows a compositional bias: basic and acidic residues. The tract at residues 1-24 (MAGKSSGDRRKPIRKGKDGKNAAP) is disordered.

Belongs to the bacterial ribosomal protein bS18 family. Part of the 30S ribosomal subunit. Forms a tight heterodimer with protein bS6.

Binds as a heterodimer with protein bS6 to the central domain of the 16S rRNA, where it helps stabilize the platform of the 30S subunit. This is Small ribosomal subunit protein bS18 from Leifsonia xyli subsp. xyli (strain CTCB07).